Here is a 748-residue protein sequence, read N- to C-terminus: Catalase-peroxidase (748 aa).

The segment at residues 91–242 is a cross-link (tryptophyl-tyrosyl-methioninium (Trp-Tyr) (with M-268)); it reads WHSAGTYRIG…LAAVQMGLIY (152 aa). Histidine 92 (proton acceptor) is an active-site residue. A disordered region spans residues 194–223; sequence DRYGKGKGSSSQGEIPADAHRHGQEQARTA. The segment at residues 242-268 is a cross-link (tryptophyl-tyrosyl-methioninium (Tyr-Met) (with W-91)); it reads YVNPEGPEGNPDPLAAAHDIRETFARM. A heme b-binding site is contributed by histidine 283. The disordered stretch occupies residues 288 to 310; the sequence is THGAGDAKHVGREPEGEDMDSQG. Positions 290–301 are enriched in basic and acidic residues; that stretch reads GAGDAKHVGREP.

It belongs to the peroxidase family. Peroxidase/catalase subfamily. Homodimer or homotetramer. It depends on heme b as a cofactor. Post-translationally, formation of the three residue Trp-Tyr-Met cross-link is important for the catalase, but not the peroxidase activity of the enzyme.

The catalysed reaction is H2O2 + AH2 = A + 2 H2O. It carries out the reaction 2 H2O2 = O2 + 2 H2O. Functionally, bifunctional enzyme with both catalase and broad-spectrum peroxidase activity. In Herbaspirillum seropedicae, this protein is Catalase-peroxidase.